Consider the following 288-residue polypeptide: Oxaloacetate decarboxylase (288 aa).

Residue S47 participates in substrate binding. D85 lines the Mg(2+) pocket. Substrate contacts are provided by R156 and H232.

This sequence belongs to the isocitrate lyase/PEP mutase superfamily. Oxaloacetate decarboxylase family. Homotetramer; dimer of dimers. Mg(2+) serves as cofactor.

The catalysed reaction is oxaloacetate + H(+) = pyruvate + CO2. Its function is as follows. Catalyzes the decarboxylation of oxaloacetate into pyruvate. Seems to play a role in maintaining cellular concentrations of bicarbonate and pyruvate. The sequence is that of Oxaloacetate decarboxylase from Rhodopseudomonas palustris (strain BisB18).